A 20-amino-acid polypeptide reads, in one-letter code: Truncated non-structural protein of 4.9 kDa (20 aa).

This sequence belongs to the coronaviruses ns4.9 protein family.

The protein is Truncated non-structural protein of 4.9 kDa of Sus scrofa (Pig).